The following is a 573-amino-acid chain: Proline--tRNA ligase (573 aa).

Belongs to the class-II aminoacyl-tRNA synthetase family. ProS type 1 subfamily. Homodimer.

Its subcellular location is the cytoplasm. The enzyme catalyses tRNA(Pro) + L-proline + ATP = L-prolyl-tRNA(Pro) + AMP + diphosphate. Catalyzes the attachment of proline to tRNA(Pro) in a two-step reaction: proline is first activated by ATP to form Pro-AMP and then transferred to the acceptor end of tRNA(Pro). As ProRS can inadvertently accommodate and process non-cognate amino acids such as alanine and cysteine, to avoid such errors it has two additional distinct editing activities against alanine. One activity is designated as 'pretransfer' editing and involves the tRNA(Pro)-independent hydrolysis of activated Ala-AMP. The other activity is designated 'posttransfer' editing and involves deacylation of mischarged Ala-tRNA(Pro). The misacylated Cys-tRNA(Pro) is not edited by ProRS. The sequence is that of Proline--tRNA ligase from Cupriavidus taiwanensis (strain DSM 17343 / BCRC 17206 / CCUG 44338 / CIP 107171 / LMG 19424 / R1) (Ralstonia taiwanensis (strain LMG 19424)).